The sequence spans 92 residues: Acylphosphatase (92 aa).

The Acylphosphatase-like domain occupies 5–92 (YIVAYVYGVV…TPFETFSIRY (88 aa)). Active-site residues include R20 and N38.

This sequence belongs to the acylphosphatase family.

It carries out the reaction an acyl phosphate + H2O = a carboxylate + phosphate + H(+). This Yersinia pseudotuberculosis serotype O:1b (strain IP 31758) protein is Acylphosphatase (acyP).